Consider the following 182-residue polypeptide: Putative manganese efflux pump MntP (182 aa).

The next 6 membrane-spanning stretches (helical) occupy residues 6 to 26 (LIPL…VSLG), 37 to 57 (ILYI…IGMV), 72 to 92 (FAGA…SILE), 101 to 121 (IGIS…SVGL), 131 to 151 (IITI…GLLL), and 162 to 182 (YGEI…LFPI).

It belongs to the MntP (TC 9.B.29) family.

It localises to the cell membrane. Functionally, probably functions as a manganese efflux pump. This chain is Putative manganese efflux pump MntP, found in Bacillus mycoides (strain KBAB4) (Bacillus weihenstephanensis).